Here is a 139-residue protein sequence, read N- to C-terminus: Large ribosomal subunit protein uL16 (139 aa).

Belongs to the universal ribosomal protein uL16 family. Part of the 50S ribosomal subunit.

Functionally, binds 23S rRNA and is also seen to make contacts with the A and possibly P site tRNAs. The polypeptide is Large ribosomal subunit protein uL16 (Chlorobium chlorochromatii (strain CaD3)).